A 187-amino-acid polypeptide reads, in one-letter code: MKITEPIIKEAQEKMTKAEDSLRRELGNIRAGRANASLLNRINVEYYGAPTPLNQMAQISVPEARVLLVTPYDKTSLKNIEHAIMASDLGIAPMNDGTAIRLVIPQLTEERRKELAKQVKAVSETGKVAVRNIRRDMMDALKKAQKNGDLTEDDLRDLENQAQKVTDESIKNIDKITEDKEKEVLEG.

Belongs to the RRF family.

The protein localises to the cytoplasm. Functionally, responsible for the release of ribosomes from messenger RNA at the termination of protein biosynthesis. May increase the efficiency of translation by recycling ribosomes from one round of translation to another. The chain is Ribosome-recycling factor from Ligilactobacillus salivarius (strain UCC118) (Lactobacillus salivarius).